We begin with the raw amino-acid sequence, 2193 residues long: Non-reducing polyketide synthase esdpA (2193 aa).

One can recognise a Starter acyltransferase (SAT) domain in the interval 90–252 (NVLLAPLTVL…AKVQVNGRYH (163 aa)). The Ketosynthase family 3 (KS3) domain maps to 381-797 (DECVAIVGAA…GNNTVIIVCE (417 aa)). Residues Cys-546, His-682, and His-720 each act as for beta-ketoacyl synthase activity in the active site. The Malonyl-CoA:ACP transacylase (MAT) domain occupies 906-1158 (VFSGQSGMTV…YFVDAVRRIK (253 aa)). Ser-992 (for acyl/malonyl transferase activity) is an active-site residue. Residues 1265 to 1392 (PPMLSLENFS…GRVVLEDRRR (128 aa)) form an N-terminal hotdog fold region. The region spanning 1265 to 1569 (PPMLSLENFS…FVKISSHILQ (305 aa)) is the PKS/mFAS DH domain. Positions 1419 to 1569 (VFSASGSIAY…FVKISSHILQ (151 aa)) are C-terminal hotdog fold. Asp-1479 serves as the catalytic Proton donor; for dehydratase activity. Residues 1723–1799 (RILSDSMIKL…ELHDLMQSHP (77 aa)) enclose the Carrier domain. Ser-1759 carries the O-(pantetheine 4'-phosphoryl)serine modification. Residues 1944–2177 (YHGSEHKLLR…GFTHVDWSND (234 aa)) are methyltransferase (CMeT) domain.

Pantetheine 4'-phosphate serves as cofactor.

The protein operates within secondary metabolite biosynthesis; terpenoid biosynthesis. In terms of biological role, non-reducing polyketide synthase; part of the cluster that mediates the biosynthesis of shearones, diterpenoid pyrones (DPs) which are structurally diverse meroterpenoids consisting of a diterpene linked by a pyrone, and which may exhibit a range of bioactivities. Whitin the pathway, esdpA takes part to the biosynthesis of the molecular scaffold via the production of the alpha-pyrone from one molecule of acetyl-CoA, two molecules of malonyl-CoA and one molecule of S-adenosyl-L-methionine (SAM). The molecular scaffold is commonly biosynthesized by a series of enzymes including the non-reducing polyketide synthase (NR-PKS) esdpA that generates an alpha-pyrone; the prenyltransferase esdpC that attaches a geranylgeranyl pyrophosphate (GGPP) produced by the GGPP synthase (GGPPS) esdpD onto the pyrone unit; the FAD-dependent monooxygenase esdpE that converts an olefin on the diterpene unit into an epoxide; and the terpene cyclase esdpB that catalyzes the cyclization reactions to give the molecular backbone shearone A. In the modification steps, esdpF oxidizes the hydroxy group to a ketone at C-3 and esdpG then attaches hydroxy groups at both C-11 and C-12. After that, esdpI hydroxylates at C-20 and esdpH hydroxylates at C-6'. The ether bridge is generated by nucleophilic attack of the hydroxy group at C-20 to the carbonyl carbon at C-3. EsdpH can also functions prior to esdpI. The different combinations of these modification enzymes lead to the production of diverse shearone derivatives, shearone I being the end product of the pathway. The alpha-ketoglutarate-dependent dioxygenase esdpJ seems not to be involved in this pathway. The sequence is that of Non-reducing polyketide synthase esdpA from Penicillium shearii (Eupenicillium shearii).